Consider the following 315-residue polypeptide: MHGHGGYDSDFSDDEQGGGSSKKRKKTVEDELLLTKPFQKEKYGKVAHKQVAADLLDREEARNRRFHLIAMDAYQRHTKFVNDYILYYGGKREDFKRLGENDKTDLDVIRENHRFLWNEEDEADMTWEKRLAKKYYDKLFKEYCIADLSRYKENKFGFRWRIEKEVISGKGQFFCGNKCCDEKEGLKSWEVNFGYTEHGEKRNALVKLRLCQECSFKLNFHHRRKEIKSTKKRSKTKTESDESPHKNSRSSSSEEASQGKDEGHSSSKRSEDSRNRNAGEEDSASDSELWKGPLPETDEKSQEEEFDDYFQDLFL.

Position 1 is an N-acetylmethionine (Met1). A disordered region spans residues 1 to 28 (MHGHGGYDSDFSDDEQGGGSSKKRKKTV). Ser9 and Ser12 each carry phosphoserine. Lys36 is modified (N6-acetyllysine). A compositionally biased stretch (basic residues) spans 225–235 (KEIKSTKKRSK). Positions 225-308 (KEIKSTKKRS…EKSQEEEFDD (84 aa)) are disordered. Over residues 236–245 (TKTESDESPH) the composition is skewed to basic and acidic residues. A phosphoserine mark is found at Ser251 and Ser252. Positions 257–279 (SQGKDEGHSSSKRSEDSRNRNAG) are enriched in basic and acidic residues. Phosphoserine is present on residues Ser283 and Ser285.

Interacts with ESS2.

Its subcellular location is the nucleus. Functionally, may be involved in pre-mRNA splicing. This is Protein FRA10AC1 homolog (Fra10ac1) from Rattus norvegicus (Rat).